The sequence spans 262 residues: Cytochrome c oxidase subunit 3 (262 aa).

The next 7 helical transmembrane spans lie at 13–33, 38–58, 82–102, 134–154, 159–179, 200–220, and 237–257; these read PWPLLASFAAFLSTTGGVMYM, GGGLLLAIGQLSLFYVMYVWW, GMLLFILSEIMFFFAFFWAFF, TIILLTSGASVTWAHHAILAG, GIISLAITVLLAVIFTGFQAL, ATGFHGFHVIIGTIFIAVCLF, and AAAWYWHMVDVVWLFLFVCIY.

Belongs to the cytochrome c oxidase subunit 3 family. Component of the cytochrome c oxidase (complex IV, CIV), a multisubunit enzyme composed of a catalytic core of 3 subunits and several supernumerary subunits. The complex exists as a monomer or a dimer and forms supercomplexes (SCs) in the inner mitochondrial membrane with ubiquinol-cytochrome c oxidoreductase (cytochrome b-c1 complex, complex III, CIII).

It is found in the mitochondrion inner membrane. The catalysed reaction is 4 Fe(II)-[cytochrome c] + O2 + 8 H(+)(in) = 4 Fe(III)-[cytochrome c] + 2 H2O + 4 H(+)(out). Functionally, component of the cytochrome c oxidase, the last enzyme in the mitochondrial electron transport chain which drives oxidative phosphorylation. The respiratory chain contains 3 multisubunit complexes succinate dehydrogenase (complex II, CII), ubiquinol-cytochrome c oxidoreductase (cytochrome b-c1 complex, complex III, CIII) and cytochrome c oxidase (complex IV, CIV), that cooperate to transfer electrons derived from NADH and succinate to molecular oxygen, creating an electrochemical gradient over the inner membrane that drives transmembrane transport and the ATP synthase. Cytochrome c oxidase is the component of the respiratory chain that catalyzes the reduction of oxygen to water. Electrons originating from reduced cytochrome c in the intermembrane space (IMS) are transferred via the dinuclear copper A center (CU(A)) of subunit 2 and heme A of subunit 1 to the active site in subunit 1, a binuclear center (BNC) formed by heme A3 and copper B (CU(B)). The BNC reduces molecular oxygen to 2 water molecules using 4 electrons from cytochrome c in the IMS and 4 protons from the mitochondrial matrix. This chain is Cytochrome c oxidase subunit 3 (COX3), found in Prototheca wickerhamii.